The chain runs to 908 residues: Probable serine/threonine-protein kinase DDB_G0278521 (908 aa).

At 1 to 153 (MSNNKIIESL…RGEKLSTLDR (153 aa)) the chain is on the extracellular side. The chain crosses the membrane as a helical span at residues 154-174 (IICFSIIYSQDQILLFLLNFI). Residues 175–908 (LSNINCNNNN…SDQNDSDLYD (734 aa)) are Cytoplasmic-facing. ANK repeat units lie at residues 258 to 289 (LKVYPIYFAIVKVIGGGSLVRFLLSILPNVYN), 300 to 326 (TNRSALFYSTTREMTLLLLQLGCNIHD), 330 to 361 (KGMLPIHYHSLNGHVDVVKCLIDDSTINALDQ), 362 to 391 (SNNTPLNLASLSGNLSLAKILLNSGARLSI), and 395 to 424 (NGRYPIHNACVNGNIDLIRYFLELYSKMNS). Low complexity predominate over residues 461–472 (NSNNLTNSNSSS). A disordered region spans residues 461-491 (NSNNLTNSNSSSVGGLRISNGGNTQQQSIQI). A compositionally biased stretch (polar residues) spans 480–490 (NGGNTQQQSIQ). The stretch at 495-524 (ENNTPIDLLVLNNHFTIAIELLKYEGYIVG) is one ANK 6 repeat. Residues 530 to 817 (FKTARKIGAG…LPIANIPKFL (288 aa)) form the Protein kinase domain. ATP-binding positions include 536 to 544 (IGAGAFGDV) and K557. The active-site Proton acceptor is D677.

Belongs to the protein kinase superfamily. TKL Ser/Thr protein kinase family.

The protein localises to the membrane. The catalysed reaction is L-seryl-[protein] + ATP = O-phospho-L-seryl-[protein] + ADP + H(+). The enzyme catalyses L-threonyl-[protein] + ATP = O-phospho-L-threonyl-[protein] + ADP + H(+). The sequence is that of Probable serine/threonine-protein kinase DDB_G0278521 from Dictyostelium discoideum (Social amoeba).